Reading from the N-terminus, the 511-residue chain is Histidine ammonia-lyase (511 aa).

The segment at residues 142–144 is a cross-link (5-imidazolinone (Ala-Gly)); that stretch reads ASG. Ser-143 carries the post-translational modification 2,3-didehydroalanine (Ser).

This sequence belongs to the PAL/histidase family. Contains an active site 4-methylidene-imidazol-5-one (MIO), which is formed autocatalytically by cyclization and dehydration of residues Ala-Ser-Gly.

The protein resides in the cytoplasm. It carries out the reaction L-histidine = trans-urocanate + NH4(+). Its pathway is amino-acid degradation; L-histidine degradation into L-glutamate; N-formimidoyl-L-glutamate from L-histidine: step 1/3. In Brucella ovis (strain ATCC 25840 / 63/290 / NCTC 10512), this protein is Histidine ammonia-lyase.